Consider the following 486-residue polypeptide: RAC-beta serine/threonine-protein kinase A (486 aa).

In terms of domain architecture, PH spans 5-110 (MVIKEGWLQK…WIIAIQTVAN (106 aa)). Serine 133 and serine 136 each carry an O-linked (GlcNAc) serine glycan. Positions 157 to 414 (FDYLKLLGKG…AQEVMSHRFF (258 aa)) constitute a Protein kinase domain. ATP contacts are provided by residues 163 to 171 (LGKGTFGKV) and lysine 186. Aspartate 280 serves as the catalytic Proton acceptor. O-linked (GlcNAc) threonine glycosylation occurs at threonine 311. Threonine 314 is modified (phosphothreonine). A glycan (O-linked (GlcNAc) threonine) is linked at threonine 318. The AGC-kinase C-terminal domain occupies 415–486 (VSINWQDVTE…QFSYSASIRE (72 aa)). Residues 455–486 (LTPPDRYDNLDALESDQRPHFPQFSYSASIRE) form a disordered region. Residues 459-473 (DRYDNLDALESDQRP) are compositionally biased toward basic and acidic residues. Serine 479 is subject to Phosphoserine. An O-linked (GlcNAc) serine; alternate glycan is attached at serine 479.

It belongs to the protein kinase superfamily. AGC Ser/Thr protein kinase family. RAC subfamily. In terms of processing, phosphorylation on Thr-314 and Ser-479 is required for full activity. Phosphorylation of the activation loop at Thr-314 by PDPK1/PDK1 is a prerequisite for full activation. Phosphorylation by mTORC2 at Ser-479 in response to growth factors plays a key role in AKT1 activation by facilitating subsequent phosphorylation of the activation loop by PDPK1/PDK1.

It carries out the reaction L-seryl-[protein] + ATP = O-phospho-L-seryl-[protein] + ADP + H(+). The enzyme catalyses L-threonyl-[protein] + ATP = O-phospho-L-threonyl-[protein] + ADP + H(+). Its activity is regulated as follows. Two specific sites, one in the kinase domain (Thr-314) and the other in the C-terminal regulatory region (Ser-479), need to be phosphorylated for its full activation. Its function is as follows. Akt2-a is one of several closely related serine/threonine-protein kinases known as the AKT kinase, and which regulate many processes including metabolism, proliferation, cell survival, growth and angiogenesis. This is mediated through serine and/or threonine phosphorylation of a range of downstream substrates. Over 100 substrate candidates have been reported so far, but for most of them, no isoform specificity has been reported. May be involved in the inhibition of ciliogenesis. This chain is RAC-beta serine/threonine-protein kinase A (akt2-a), found in Xenopus laevis (African clawed frog).